The primary structure comprises 337 residues: Fructose-1,6-bisphosphatase class 1 (337 aa).

Positions 92, 114, 116, and 117 each coordinate Mg(2+). Substrate contacts are provided by residues 117 to 120 (DGSS), N209, and K275. E281 contacts Mg(2+).

Belongs to the FBPase class 1 family. As to quaternary structure, homotetramer. It depends on Mg(2+) as a cofactor.

It localises to the cytoplasm. It carries out the reaction beta-D-fructose 1,6-bisphosphate + H2O = beta-D-fructose 6-phosphate + phosphate. Its pathway is carbohydrate biosynthesis; gluconeogenesis. The sequence is that of Fructose-1,6-bisphosphatase class 1 from Thiobacillus denitrificans (strain ATCC 25259 / T1).